An 84-amino-acid chain; its full sequence is Magnetosome protein MamR (84 aa).

It belongs to the magnetosome MamR family.

The protein localises to the magnetosome. Functionally, may play a role in controlling magnetite number and size. Coexpression of mamLQRBIEMO in a deletion of the 17 gene mamAB operon restores magnetosome vesicle formation but not magnetite biosynthesis. In Magnetospirillum gryphiswaldense (strain DSM 6361 / JCM 21280 / NBRC 15271 / MSR-1), this protein is Magnetosome protein MamR.